The following is an 849-amino-acid chain: Membrane protein-large ribosomal subunit bL9 fusion protein (849 aa).

The interval Met1 to Thr680 is unknown. The next 2 membrane-spanning stretches (helical) occupy residues Phe11–Gln31 and Ile64–Phe84. One can recognise a GGDEF domain in the interval Lys214–Glu342. The large ribosomal subunit protein bL9 stretch occupies residues Val681–Lys849.

Belongs to the bacterial ribosomal protein bL9 family.

The protein localises to the cell membrane. In terms of biological role, binds to the 23S rRNA. This Onion yellows phytoplasma (strain OY-M) protein is Membrane protein-large ribosomal subunit bL9 fusion protein.